We begin with the raw amino-acid sequence, 253 residues long: Probable transcriptional regulatory protein slr0989 (253 aa).

The disordered stretch occupies residues 1-22 (MGGRKWQSIKRQKARVDAQKGK).

The protein belongs to the TACO1 family.

It is found in the cytoplasm. This Synechocystis sp. (strain ATCC 27184 / PCC 6803 / Kazusa) protein is Probable transcriptional regulatory protein slr0989.